An 878-amino-acid polypeptide reads, in one-letter code: Aminopeptidase M1-A (878 aa).

The segment at 105–212 is required for membrane association; sequence VGEGTLVIAF…MSTYLVAVIV (108 aa). Residues Glu145 and 278-282 each bind substrate; that span reads GAMEN. Residue His314 participates in Zn(2+) binding. Glu315 serves as the catalytic Proton acceptor. Zn(2+) is bound by residues His318 and Glu337. The Dileucine internalization motif motif lies at 727-728; sequence LL.

Belongs to the peptidase M1 family. As to quaternary structure, homodimer. Zn(2+) serves as cofactor.

The protein localises to the membrane. Its subcellular location is the microsome membrane. The protein resides in the cytoplasm. It catalyses the reaction Release of an N-terminal amino acid, Xaa-|-Yaa- from a peptide, amide or arylamide. Xaa is preferably Ala, but may be most amino acids including Pro (slow action). When a terminal hydrophobic residue is followed by a prolyl residue, the two may be released as an intact Xaa-Pro dipeptide.. The protein is Aminopeptidase M1-A of Oryza sativa subsp. japonica (Rice).